A 216-amino-acid chain; its full sequence is Probable GTP-binding protein EngB (216 aa).

Residues 37–214 (AGLEVAFAGR…RAAMIKLIAE (178 aa)) enclose the EngB-type G domain. GTP-binding positions include 45–52 (GRSNVGKS), 72–76 (GRTQE), 92–95 (DMPG), 159–162 (TKAD), and 193–195 (TSS). 2 residues coordinate Mg(2+): S52 and T74.

It belongs to the TRAFAC class TrmE-Era-EngA-EngB-Septin-like GTPase superfamily. EngB GTPase family. Mg(2+) serves as cofactor.

In terms of biological role, necessary for normal cell division and for the maintenance of normal septation. The sequence is that of Probable GTP-binding protein EngB from Rhodopseudomonas palustris (strain BisB18).